The following is an 813-amino-acid chain: Ribonuclease R (813 aa).

In terms of domain architecture, RNB spans 260 to 587; sequence RVDLRDLPLV…LHRAIKYLLA (328 aa). Lysine 544 carries the N6-acetyllysine; by PatZ modification. The 82-residue stretch at 644-725 folds into the S1 motif domain; the sequence is GNVFKGVISS…DERKIDFSLI (82 aa). Residues 731–813 are disordered; the sequence is PRNVGKTARE…KRAAKKKVAE (83 aa). Composition is skewed to basic and acidic residues over residues 737-749 and 761-774; these read TAREKAKKGDAGK and VNFEPDSAFRGEKK. Positions 775–791 are enriched in basic residues; it reads TKPKAAKKDARKAKKPS. Over residues 792-801 the composition is skewed to low complexity; that stretch reads AKTQKIAAAT. A compositionally biased stretch (basic residues) spans 802 to 813; it reads KAKRAAKKKVAE.

Belongs to the RNR ribonuclease family. RNase R subfamily. In terms of assembly, monomer. It depends on Mg(2+) as a cofactor. Post-translationally, acetylated at Lys-544 by PatZ during exponential growth phase. Acetylation alters RNase R structure and enhances binding of SsrA/tmRNA and SmpB, leading to instability and degradation of RNase R. Not acetylated and stable in stationary phase cells.

Its subcellular location is the cytoplasm. The catalysed reaction is Exonucleolytic cleavage in the 3'- to 5'-direction to yield nucleoside 5'-phosphates.. Stimulated by the presence of a monovalent cation. Highly unstable in exponential growth phase. This instability is due to the binding of SsrA/tmRNA and its associated protein SmpB to the C-terminal region of RNase R. In contrast, RNase R becomes stabilized upon entry into stationary phase. The difference in stability between exponential and stationary phase is due to the acetylation of a single lysine residue. In terms of biological role, 3'-5' exoribonuclease that releases 5'-nucleoside monophosphates and is involved in maturation of structured RNAs (rRNAs, tRNAs and SsrA/tmRNA). In stationary phase, involved in the post-transcriptional regulation of ompA mRNA stability. Shortens RNA processively to di- and trinucleotides. In vitro, exhibits helicase activity, which is independent of its RNase activity. RNases 2 and R (rnb and this entry) contribute to rRNA degradation during starvation, while RNase R and PNPase (this entry and pnp) are the major contributors to quality control of rRNA during steady state growth. Required for the expression of virulence genes in enteroinvasive strains of E.coli. The protein is Ribonuclease R (rnr) of Escherichia coli (strain K12).